A 94-amino-acid polypeptide reads, in one-letter code: Pyrimidine/purine nucleoside phosphorylase (94 aa).

The protein belongs to the nucleoside phosphorylase PpnP family.

The catalysed reaction is a purine D-ribonucleoside + phosphate = a purine nucleobase + alpha-D-ribose 1-phosphate. It catalyses the reaction adenosine + phosphate = alpha-D-ribose 1-phosphate + adenine. The enzyme catalyses cytidine + phosphate = cytosine + alpha-D-ribose 1-phosphate. It carries out the reaction guanosine + phosphate = alpha-D-ribose 1-phosphate + guanine. The catalysed reaction is inosine + phosphate = alpha-D-ribose 1-phosphate + hypoxanthine. It catalyses the reaction thymidine + phosphate = 2-deoxy-alpha-D-ribose 1-phosphate + thymine. The enzyme catalyses uridine + phosphate = alpha-D-ribose 1-phosphate + uracil. It carries out the reaction xanthosine + phosphate = alpha-D-ribose 1-phosphate + xanthine. In terms of biological role, catalyzes the phosphorolysis of diverse nucleosides, yielding D-ribose 1-phosphate and the respective free bases. Can use uridine, adenosine, guanosine, cytidine, thymidine, inosine and xanthosine as substrates. Also catalyzes the reverse reactions. The chain is Pyrimidine/purine nucleoside phosphorylase from Salmonella typhimurium (strain LT2 / SGSC1412 / ATCC 700720).